The sequence spans 1371 residues: uncharacterized protein (1371 aa).

A disordered region spans residues W1020–P1048. Residues P1029–L1046 show a composition bias toward basic and acidic residues. The Autotransporter domain maps to G1083–F1371.

Its subcellular location is the cell outer membrane. This is an uncharacterized protein from Escherichia coli (strain K12).